The chain runs to 186 residues: Tumor necrosis factor alpha-induced protein 8-like protein 1 (186 aa).

A coiled-coil region spans residues 37 to 70 (EVLDELYRVTKEYTRNRKEAQKIIKNLIKMVVKL).

It belongs to the TNFAIP8 family.

It is found in the cytoplasm. The chain is Tumor necrosis factor alpha-induced protein 8-like protein 1 (tnfaip8l1) from Danio rerio (Zebrafish).